The primary structure comprises 405 residues: Bifunctional enzyme IspD/IspF (405 aa).

A 2-C-methyl-D-erythritol 4-phosphate cytidylyltransferase region spans residues 1–246; that stretch reads MLQMPSKQPI…KLSASLLPDV (246 aa). The segment at 247 to 405 is 2-C-methyl-D-erythritol 2,4-cyclodiphosphate synthase; that stretch reads RTGNGYDVHQ…TATVVYRGRT (159 aa). A divalent metal cation-binding residues include Asp253 and His255. 4-CDP-2-C-methyl-D-erythritol 2-phosphate is bound by residues 253–255 and 279–280; these read DVH and HS. Residue His287 coordinates a divalent metal cation. 4-CDP-2-C-methyl-D-erythritol 2-phosphate-binding positions include 301 to 303, 377 to 380, Phe384, and Arg387; these read DIG and TTNE.

This sequence in the N-terminal section; belongs to the IspD/TarI cytidylyltransferase family. IspD subfamily. The protein in the C-terminal section; belongs to the IspF family. A divalent metal cation serves as cofactor.

It catalyses the reaction 2-C-methyl-D-erythritol 4-phosphate + CTP + H(+) = 4-CDP-2-C-methyl-D-erythritol + diphosphate. The catalysed reaction is 4-CDP-2-C-methyl-D-erythritol 2-phosphate = 2-C-methyl-D-erythritol 2,4-cyclic diphosphate + CMP. The protein operates within isoprenoid biosynthesis; isopentenyl diphosphate biosynthesis via DXP pathway; isopentenyl diphosphate from 1-deoxy-D-xylulose 5-phosphate: step 2/6. Its pathway is isoprenoid biosynthesis; isopentenyl diphosphate biosynthesis via DXP pathway; isopentenyl diphosphate from 1-deoxy-D-xylulose 5-phosphate: step 4/6. In terms of biological role, bifunctional enzyme that catalyzes the formation of 4-diphosphocytidyl-2-C-methyl-D-erythritol from CTP and 2-C-methyl-D-erythritol 4-phosphate (MEP) (IspD), and catalyzes the conversion of 4-diphosphocytidyl-2-C-methyl-D-erythritol 2-phosphate (CDP-ME2P) to 2-C-methyl-D-erythritol 2,4-cyclodiphosphate (ME-CPP) with a corresponding release of cytidine 5-monophosphate (CMP) (IspF). In Rhizobium etli (strain CIAT 652), this protein is Bifunctional enzyme IspD/IspF.